We begin with the raw amino-acid sequence, 145 residues long: MKTVALILASLALLACTAESGVDFDKTLTHPNGLVVERPVGFDARRSAEGFRFDEGGKLRNPRQLEVQRQDAPPPPDLASRRLGDGEARYKVEEDDGGSAGSEYRLWAAKPAGARWIVVSASEQSEDGEPTFALAWALLERARLQ.

The signal sequence occupies residues 1-15 (MKTVALILASLALLA). Cysteine 16 carries the N-palmitoyl cysteine lipid modification. A lipid anchor (S-diacylglycerol cysteine) is attached at cysteine 16. The segment at 53–85 (FDEGGKLRNPRQLEVQRQDAPPPPDLASRRLGD) is disordered. A Ca(2+)-binding site is contributed by glutamate 126.

In terms of assembly, forms a heterotetramer with Tse3 consisting of two Tse3 dimers and two Tsi3 dimers. Formation of the complex inactivates Tse3 enzymatic activity.

In terms of biological role, immunity protein that plays a role in preventing early activation of toxin Tse3. Occupies Tse3 substrate binding site and prevents the substrate from entering. The protein is Immune protein Tsi3 of Pseudomonas aeruginosa (strain ATCC 15692 / DSM 22644 / CIP 104116 / JCM 14847 / LMG 12228 / 1C / PRS 101 / PAO1).